We begin with the raw amino-acid sequence, 202 residues long: Peptide deformylase (202 aa).

2 residues coordinate Fe cation: cysteine 121 and histidine 163. Residue glutamate 164 is part of the active site. Histidine 167 lines the Fe cation pocket.

This sequence belongs to the polypeptide deformylase family. Fe(2+) serves as cofactor.

The enzyme catalyses N-terminal N-formyl-L-methionyl-[peptide] + H2O = N-terminal L-methionyl-[peptide] + formate. In terms of biological role, removes the formyl group from the N-terminal Met of newly synthesized proteins. Requires at least a dipeptide for an efficient rate of reaction. N-terminal L-methionine is a prerequisite for activity but the enzyme has broad specificity at other positions. This is Peptide deformylase from Synechococcus sp. (strain CC9311).